A 246-amino-acid chain; its full sequence is UDP-N-acetyl-D-mannosaminuronic acid transferase (246 aa).

The protein belongs to the glycosyltransferase 26 family.

It carries out the reaction UDP-N-acetyl-alpha-D-mannosaminouronate + N-acetyl-alpha-D-glucosaminyl-di-trans,octa-cis-undecaprenyl diphosphate = beta-D-ManNAcA-(1-&gt;4)-alpha-D-GlcNAc-di-trans,octa-cis-undecaprenyl diphosphate + UDP + H(+). It participates in bacterial outer membrane biogenesis; enterobacterial common antigen biosynthesis. Catalyzes the synthesis of Und-PP-GlcNAc-ManNAcA (Lipid II), the second lipid-linked intermediate involved in enterobacterial common antigen (ECA) synthesis. In Escherichia coli (strain 55989 / EAEC), this protein is UDP-N-acetyl-D-mannosaminuronic acid transferase.